The following is a 177-amino-acid chain: MPGQMPVAPGTNPDQSFFDDLSGEVGDKGFLVTSTEDLFNWARTGSLWWMTFGLACCAVEMIHVNMPRYDMERFGVAPRASPRQSDVMIVAGTLCNKMAPALRRVYDQMSNPKYVISMGSCANGGGYYHYSYSVVRGCDRIVPVDIYVPGCPPTAEALLYGVMQLQRKIRRTGTIER.

[4Fe-4S] cluster-binding residues include C56, C57, C121, and C151.

It belongs to the complex I 20 kDa subunit family. NDH-1 is composed of 14 different subunits. Subunits NuoB, C, D, E, F, and G constitute the peripheral sector of the complex. Requires [4Fe-4S] cluster as cofactor.

The protein resides in the cell inner membrane. The catalysed reaction is a quinone + NADH + 5 H(+)(in) = a quinol + NAD(+) + 4 H(+)(out). In terms of biological role, NDH-1 shuttles electrons from NADH, via FMN and iron-sulfur (Fe-S) centers, to quinones in the respiratory chain. Couples the redox reaction to proton translocation (for every two electrons transferred, four hydrogen ions are translocated across the cytoplasmic membrane), and thus conserves the redox energy in a proton gradient. The sequence is that of NADH-quinone oxidoreductase subunit B from Sphingopyxis alaskensis (strain DSM 13593 / LMG 18877 / RB2256) (Sphingomonas alaskensis).